We begin with the raw amino-acid sequence, 132 residues long: S-protein homolog 8 (132 aa).

An N-terminal signal peptide occupies residues 1-20; the sequence is MHSLSWFLLVIGLSVGLSSG.

The protein belongs to the plant self-incompatibility (S1) protein family. In terms of tissue distribution, mostly expressed in seedlings, stems, leaves and floral tissues, and, to a lower extent, in roots.

Its subcellular location is the secreted. The chain is S-protein homolog 8 from Arabidopsis thaliana (Mouse-ear cress).